Reading from the N-terminus, the 287-residue chain is Large ribosomal subunit protein uL2 (287 aa).

The interval 221–287 (RGSVMNPCDH…SKRSRGGRDS (67 aa)) is disordered. Over residues 258–287 (KTRKRNKPSNKFVLRKRRKTSKRSRGGRDS) the composition is skewed to basic residues.

This sequence belongs to the universal ribosomal protein uL2 family. In terms of assembly, part of the 50S ribosomal subunit. Forms a bridge to the 30S subunit in the 70S ribosome.

Its function is as follows. One of the primary rRNA binding proteins. Required for association of the 30S and 50S subunits to form the 70S ribosome, for tRNA binding and peptide bond formation. It has been suggested to have peptidyltransferase activity; this is somewhat controversial. Makes several contacts with the 16S rRNA in the 70S ribosome. The sequence is that of Large ribosomal subunit protein uL2 from Synechococcus sp. (strain CC9311).